Consider the following 556-residue polypeptide: Solute carrier family 22 member 1 (556 aa).

Topologically, residues 1-21 (MPTVDDVLEQVGEFGWFQKQA) are cytoplasmic. The helical transmembrane segment at 22 to 42 (FLLLCLISASLAPIYVGIVFL) threads the bilayer. Residues 43-150 (GFTPGHYCQN…LVCGDAWKVD (108 aa)) lie on the Extracellular side of the membrane. Asn71 is a glycosylation site (N-linked (GlcNAc...) asparagine). Residues 151-171 (LFQSCVNLGFFLGSLVVGYIA) traverse the membrane as a helical segment. Residues 172-177 (DRFGRK) lie on the Cytoplasmic side of the membrane. The chain crosses the membrane as a helical span at residues 178-198 (LCLLVTTLVTSVSGVLTAVAP). Residues 199–211 (DYTSMLLFRLLQG) lie on the Extracellular side of the membrane. A helical membrane pass occupies residues 212-231 (MVSKGSWVSGYTLITEFVGS). Residues 232 to 238 (GYRRTTA) lie on the Cytoplasmic side of the membrane. A helical transmembrane segment spans residues 239-259 (ILYQMAFTVGLVGLAGVAYAI). Topologically, residues 260 to 263 (PDWR) are extracellular. The chain crosses the membrane as a helical span at residues 264–284 (WLQLAVSLPTFLFLLYYWFVP). The Proline-rich sequence motif lies at 284–288 (PESPR). Residues 285-348 (ESPRWLLSQK…FRTPNLRKHT (64 aa)) lie on the Cytoplasmic side of the membrane. Ser334 carries the phosphoserine modification. The chain crosses the membrane as a helical span at residues 349–369 (VILMYLWFSCAVLYQGLIMHV). Topologically, residues 370-377 (GATGANLY) are extracellular. The helical transmembrane segment at 378 to 398 (LDFFYSSLVEFPAAFIILVTI) threads the bilayer. Over 399–403 (DRIGR) the chain is Cytoplasmic. The helical transmembrane segment at 404 to 424 (IYPIAASNLVTGAACLLMIFI) threads the bilayer. The Extracellular portion of the chain corresponds to 425 to 429 (PHELH). A helical membrane pass occupies residues 430 to 452 (WLNVTLACLGRMGATIVLQMVCL). The Cytoplasmic segment spans residues 453 to 465 (VNAELYPTFIRNL). A helical transmembrane segment spans residues 466–486 (GMMVCSALCDLGGIFTPFMVF). Topologically, residues 487–493 (RLMEVWQ) are extracellular. The chain crosses the membrane as a helical span at residues 494–514 (ALPLILFGVLGLTAGAMTLLL). Over 515–556 (PETKGVALPETIEEAENLGRRKSKAKENTIYLQVQTGKSSST) the chain is Cytoplasmic. Thr543 bears the Phosphothreonine mark.

It belongs to the major facilitator (TC 2.A.1) superfamily. Organic cation transporter (TC 2.A.1.19) family. In terms of processing, phosphorylated. As to expression, expressed in kidney cortex in S1, S2 segments of renal proximal tubules as well as in kidney medulla. Expressed throughout the liver lobuli, in hepatocytes surrounding the central veins. Expressed in enterocytes of villi and crypts in small intestine. Expressed in brain, in some white matter regions like the corpus callosum and in the granular layer of the cerebellum. Expressed in Sertoli cells in testis. Expressed in colon. Expressed in tracheal and bronchial ciliated epithelium in the respiratory tract. Expressed in spleen, moderately in skin, and weakly in the gastrointestinal tract, lung, thymus, muscle, and prostate. In terms of tissue distribution, expressed in kidney cortex and medulla. Expressed in intestine, liver and colon.

Its subcellular location is the basolateral cell membrane. It localises to the apical cell membrane. The protein resides in the lateral cell membrane. The protein localises to the basal cell membrane. It is found in the cell membrane. It catalyses the reaction 1-methylnicotinamide(out) = 1-methylnicotinamide(in). The catalysed reaction is dopamine(out) = dopamine(in). The enzyme catalyses serotonin(out) = serotonin(in). It carries out the reaction (R)-adrenaline(out) = (R)-adrenaline(in). It catalyses the reaction (R)-noradrenaline(out) = (R)-noradrenaline(in). The catalysed reaction is histamine(out) = histamine(in). The enzyme catalyses guanidine(out) = guanidine(in). It carries out the reaction choline(out) = choline(in). It catalyses the reaction acetylcholine(in) = acetylcholine(out). The catalysed reaction is thiamine(in) = thiamine(out). The enzyme catalyses agmatine(out) = agmatine(in). It carries out the reaction putrescine(out) = putrescine(in). It catalyses the reaction spermidine(in) = spermidine(out). The catalysed reaction is (R)-carnitine(in) = (R)-carnitine(out). The enzyme catalyses O-isobutanoyl-(R)-carnitine(in) = O-isobutanoyl-(R)-carnitine(out). It carries out the reaction O-acetyl-(R)-carnitine(in) = O-acetyl-(R)-carnitine(out). It catalyses the reaction O-3-hydroxybutanoyl-(R)-carnitine(in) = O-3-hydroxybutanoyl-(R)-carnitine(out). The catalysed reaction is O-propanoyl-(R)-carnitine(in) = O-propanoyl-(R)-carnitine(out). The enzyme catalyses O-butanoyl-(R)-carnitine(in) = O-butanoyl-(R)-carnitine(out). It carries out the reaction O-2-methylbutanoyl-(R)-carnitine(in) = O-2-methylbutanoyl-(R)-carnitine(out). It catalyses the reaction O-3-methylbutanoyl-(R)-carnitine(in) = O-3-methylbutanoyl-(R)-carnitine(out). The catalysed reaction is O-hexanoyl-(R)-carnitine(in) = O-hexanoyl-(R)-carnitine(out). The enzyme catalyses L-histidyl-L-proline diketopiperazine(in) = L-histidyl-L-proline diketopiperazine(out). It carries out the reaction (R)-salsolinol(in) = (R)-salsolinol(out). It catalyses the reaction prostaglandin F2alpha(out) = prostaglandin F2alpha(in). The catalysed reaction is prostaglandin E2(out) = prostaglandin E2(in). Phosphorylation of the transporter leads to changes in its substrate affinity, resulting in a regulation of the transport activity. In contrast with human ortholog, ASP uptake is stimulated by protein kinase A (PKA) and C (PKC) and endogenous tyrosine kinase activation. ASP affinity is induced by PKC-dependent phosphorylation. Inhibited by cGMP, most likely through a cGMP-binding protein that interacts with OCT1. Its function is as follows. Electrogenic voltage-dependent transporter that mediates the transport of a variety of organic cations such as endogenous bioactive amines, cationic drugs and xenobiotics. Functions as a pH- and Na(+)-independent, bidirectional transporter. Cation cellular uptake or release is driven by the electrochemical potential (i.e. membrane potential and concentration gradient) and substrate selectivity. Hydrophobicity is a major requirement for recognition in polyvalent substrates and inhibitors. Primarily expressed in the basolateral membrane of hepatocytes and proximal tubules and involved in the uptake and disposition of cationic compounds from the blood by hepatic and renal clearance. Most likely functions as an uptake carrier in enterocytes contributing to the intestinal excretion and elimination of organic cations from the systemic circulation. Transports endogenous monoamines such as N-1-methylnicotinamide (NMN), guanidine, neurotransmitters dopamine, serotonin, noradrenaline, adrenaline and histamine, and quaternary ammonium compound such as choline. Also transports natural polyamines such as spermidine, agmatine and putrescine at low affinity, but relatively high turnover. Involved in the hepatic uptake of vitamin B1/thiamine, hence regulating hepatic lipid and energy metabolism. Contributes to the influx and efflux of fatty acid carriers carnitines and acylcarnitines across the basolateral membrane of hepatocytes, from the liver to the systemic circulation and inversely and may be involved in regulating the systemic availability of hepatic acylcarnitines. Mediates the bidirectional transport of acetylcholine (ACh) at the apical membrane of ciliated cell in airway epithelium, thereby playing a role in luminal release of ACh from bronchial epithelium. Transports dopaminergic neuromodulators cyclo(his-pro) and salsolinol with lower efficency. Also capable of transporting non-amine endogenous compounds such as prostaglandin E2 (PGE2) and prostaglandin F2-alpha (PGF2-alpha). May contribute to the transport of cationic compounds in testis across the blood-testis-barrier. Also mediates the uptake of xenobiotics tributylmethylammonium (TBuMA), quinidine, N-methyl-quinine (NMQ), N-methyl-quinidine (NMQD) N-(4,4-azo-n-pentyl)-quinuclidine (APQ), azidoprocainamide methoiodide (AMP), N-(4,4-azo-n-pentyl)-21-deoxyajmalinium (APDA) and 4-(4-(dimethylamino)styryl)-N-methylpyridinium (ASP). In terms of biological role, functional isoform capable of transporting TEA. The polypeptide is Solute carrier family 22 member 1 (Rattus norvegicus (Rat)).